The primary structure comprises 495 residues: UDP-N-acetylmuramoyl-L-alanyl-D-glutamate--2,6-diaminopimelate ligase (495 aa).

UDP-N-acetyl-alpha-D-muramoyl-L-alanyl-D-glutamate-binding positions include Leu27, Ser29, and 44-46; that span reads HQA. ATP is bound at residue 116-122; it reads GTNGKTT. UDP-N-acetyl-alpha-D-muramoyl-L-alanyl-D-glutamate is bound by residues Asn157, 158 to 159, Ser185, Gln191, and Arg193; that span reads TT. Lys225 bears the N6-carboxylysine mark. Residues Arg390, 414–417, Gly465, and Glu469 contribute to the meso-2,6-diaminopimelate site; that span reads DNPR. The Meso-diaminopimelate recognition motif motif lies at 414–417; sequence DNPR.

Belongs to the MurCDEF family. MurE subfamily. Requires Mg(2+) as cofactor. Carboxylation is probably crucial for Mg(2+) binding and, consequently, for the gamma-phosphate positioning of ATP.

It localises to the cytoplasm. The catalysed reaction is UDP-N-acetyl-alpha-D-muramoyl-L-alanyl-D-glutamate + meso-2,6-diaminopimelate + ATP = UDP-N-acetyl-alpha-D-muramoyl-L-alanyl-gamma-D-glutamyl-meso-2,6-diaminopimelate + ADP + phosphate + H(+). It functions in the pathway cell wall biogenesis; peptidoglycan biosynthesis. Functionally, catalyzes the addition of meso-diaminopimelic acid to the nucleotide precursor UDP-N-acetylmuramoyl-L-alanyl-D-glutamate (UMAG) in the biosynthesis of bacterial cell-wall peptidoglycan. This Salmonella typhimurium (strain LT2 / SGSC1412 / ATCC 700720) protein is UDP-N-acetylmuramoyl-L-alanyl-D-glutamate--2,6-diaminopimelate ligase.